A 416-amino-acid polypeptide reads, in one-letter code: CinA-like protein (416 aa).

This sequence belongs to the CinA family.

In Trichormus variabilis (strain ATCC 29413 / PCC 7937) (Anabaena variabilis), this protein is CinA-like protein.